A 430-amino-acid chain; its full sequence is Rosmarinate synthase (430 aa).

The Proton acceptor role is filled by His-152. The segment at 178 to 210 (TPLPHFDRSSLSARNPPQPQFSHAEYQPPPTLE) is disordered. Asp-377 (proton acceptor) is an active-site residue.

The protein belongs to the plant acyltransferase family.

It carries out the reaction (2R)-3-(3,4-dihydroxyphenyl)lactate + (E)-caffeoyl-CoA = (R)-rosmarinate + CoA. Its function is as follows. Involved in the biosynthesis of rosmarinic acid, a compound with antiviral, antimicrobial and anti-inflammatory activities. Can use 4-coumaroyl- and caffeoyl-CoA as hydroxycinnamoyl donors and 4-Hydroxyphenyllactate and 3.4-Dihydroxyphenyllactate, but not shikimate or quinate, as hydroxycinnamoyl acceptors. Can also putatively catalyze amide formation with D-amino acids as acceptors. The protein is Rosmarinate synthase (RAS) of Plectranthus scutellarioides (Coleus).